The following is a 209-amino-acid chain: Large ribosomal subunit protein uL3 (209 aa).

This sequence belongs to the universal ribosomal protein uL3 family. As to quaternary structure, part of the 50S ribosomal subunit. Forms a cluster with proteins L14 and L19.

One of the primary rRNA binding proteins, it binds directly near the 3'-end of the 23S rRNA, where it nucleates assembly of the 50S subunit. This is Large ribosomal subunit protein uL3 from Moorella thermoacetica (strain ATCC 39073 / JCM 9320).